Consider the following 133-residue polypeptide: Large ribosomal subunit protein uL22 (133 aa).

It belongs to the universal ribosomal protein uL22 family. In terms of assembly, part of the 50S ribosomal subunit.

This protein binds specifically to 23S rRNA; its binding is stimulated by other ribosomal proteins, e.g. L4, L17, and L20. It is important during the early stages of 50S assembly. It makes multiple contacts with different domains of the 23S rRNA in the assembled 50S subunit and ribosome. In terms of biological role, the globular domain of the protein is located near the polypeptide exit tunnel on the outside of the subunit, while an extended beta-hairpin is found that lines the wall of the exit tunnel in the center of the 70S ribosome. This is Large ribosomal subunit protein uL22 from Aquifex aeolicus (strain VF5).